A 122-amino-acid polypeptide reads, in one-letter code: MRHKHGYRKLGRVSEHRQALLRNLACDLIENGRIETTVPKAKELRKYVEKLITKSKNADLNTHRYVYSKLGSNERAKAATRKVIEEIAPKFENRKGGYTRIIKTRFRRGDAAEMCIIEFVGE.

This sequence belongs to the bacterial ribosomal protein bL17 family. Part of the 50S ribosomal subunit. Contacts protein L32.

The sequence is that of Large ribosomal subunit protein bL17 from Nautilia profundicola (strain ATCC BAA-1463 / DSM 18972 / AmH).